Reading from the N-terminus, the 467-residue chain is Chromosomal replication initiator protein DnaA (467 aa).

The segment at 1 to 90 (MSLSLWQQCL…KPVTQTPQAA (90 aa)) is domain I, interacts with DnaA modulators. The domain II stretch occupies residues 91-130 (VTSNVAAPAQVAQTQPQRAAPSTRSGWDNVPAPAEPTYRS). Over residues 98-111 (PAQVAQTQPQRAAP) the composition is skewed to low complexity. Positions 98–119 (PAQVAQTQPQRAAPSTRSGWDN) are disordered. A domain III, AAA+ region region spans residues 131–347 (NVNVKHTFDN…GALNRVIANA (217 aa)). ATP contacts are provided by Gly-175, Gly-177, Lys-178, and Thr-179. The tract at residues 348 to 467 (NFTGRAITID…FSNLIRTLSS (120 aa)) is domain IV, binds dsDNA.

Belongs to the DnaA family. In terms of assembly, oligomerizes as a right-handed, spiral filament on DNA at oriC.

The protein resides in the cytoplasm. Functionally, plays an essential role in the initiation and regulation of chromosomal replication. ATP-DnaA binds to the origin of replication (oriC) to initiate formation of the DNA replication initiation complex once per cell cycle. Binds the DnaA box (a 9 base pair repeat at the origin) and separates the double-stranded (ds)DNA. Forms a right-handed helical filament on oriC DNA; dsDNA binds to the exterior of the filament while single-stranded (ss)DNA is stabiized in the filament's interior. The ATP-DnaA-oriC complex binds and stabilizes one strand of the AT-rich DNA unwinding element (DUE), permitting loading of DNA polymerase. After initiation quickly degrades to an ADP-DnaA complex that is not apt for DNA replication. Binds acidic phospholipids. The chain is Chromosomal replication initiator protein DnaA from Shigella boydii serotype 4 (strain Sb227).